The following is a 374-amino-acid chain: Pectate lyase 1 (374 aa).

Positions 1-22 are cleaved as a signal peptide; it reads MKYLLPSAAAGLLLLAAQPTMA. Cys-93 and Cys-176 are oxidised to a cystine. 4 residues coordinate Ca(2+): Asp-150, Asp-152, Glu-187, and Asp-191. Residue Arg-239 is part of the active site. Cys-350 and Cys-373 are joined by a disulfide.

The protein belongs to the polysaccharide lyase 1 family. PLADES subfamily. It depends on Ca(2+) as a cofactor.

The protein localises to the secreted. The enzyme catalyses Eliminative cleavage of (1-&gt;4)-alpha-D-galacturonan to give oligosaccharides with 4-deoxy-alpha-D-galact-4-enuronosyl groups at their non-reducing ends.. The protein operates within glycan metabolism; pectin degradation; 2-dehydro-3-deoxy-D-gluconate from pectin: step 2/5. In terms of biological role, involved in maceration and soft-rotting of plant tissue. This is Pectate lyase 1 (pel1) from Pectobacterium atrosepticum (strain SCRI 1043 / ATCC BAA-672) (Erwinia carotovora subsp. atroseptica).